Reading from the N-terminus, the 118-residue chain is UPF0102 protein PC1_0307 (118 aa).

This sequence belongs to the UPF0102 family.

The chain is UPF0102 protein PC1_0307 from Pectobacterium carotovorum subsp. carotovorum (strain PC1).